Consider the following 285-residue polypeptide: Energy-coupling factor transporter ATP-binding protein EcfA2 (285 aa).

The region spanning L6–R242 is the ABC transporter domain. G39 to S46 contributes to the ATP binding site.

It belongs to the ABC transporter superfamily. Energy-coupling factor EcfA family. Forms a stable energy-coupling factor (ECF) transporter complex composed of 2 membrane-embedded substrate-binding proteins (S component), 2 ATP-binding proteins (A component) and 2 transmembrane proteins (T component).

The protein localises to the cell membrane. Its function is as follows. ATP-binding (A) component of a common energy-coupling factor (ECF) ABC-transporter complex. Unlike classic ABC transporters this ECF transporter provides the energy necessary to transport a number of different substrates. The chain is Energy-coupling factor transporter ATP-binding protein EcfA2 from Clostridium perfringens (strain SM101 / Type A).